A 419-amino-acid chain; its full sequence is Septin-2 (419 aa).

The 267-residue stretch at 40-306 (NGFVFNVMCI…ELYRQKRLEQ (267 aa)) folds into the Septin-type G domain. Residues 50–57 (GETGLGKS) form a G1 motif region. GTP contacts are provided by residues 50–57 (GETGLGKS), S79, G105, 186–194 (KADTISKVE), G240, and R255. Positions 102–105 (DTVG) are G3 motif. The interval 185 to 188 (AKAD) is G4 motif. An important for dimerization region spans residues 259–269 (WGTVQVENETH).

This sequence belongs to the TRAFAC class TrmE-Era-EngA-EngB-Septin-like GTPase superfamily. Septin GTPase family. As to quaternary structure, may assemble into a multicomponent structure.

The protein resides in the cytoplasm. It localises to the cytoskeleton. The protein localises to the spindle. Involved in cytokinesis. This Drosophila melanogaster (Fruit fly) protein is Septin-2.